The primary structure comprises 585 residues: Vacuolar protein 8 (585 aa).

Gly2 carries the N-myristoyl glycine lipid modification. S-palmitoyl cysteine attachment occurs at residues Cys4, Cys5, and Cys7. 9 ARM repeats span residues Asn39 to Ile76, Thr77 to Val116, Thr118 to Thr157, Asp159 to His198, Gly200 to Val239, Asn243 to Ser282, Ser284 to Ile323, Pro325 to Ala365, and Asp409 to Ser448. A compositionally biased stretch (low complexity) spans Gln531–Asn562. The segment at Gln531–Gln565 is disordered.

Belongs to the beta-catenin family.

Its subcellular location is the vacuole membrane. In terms of biological role, functions in both vacuole inheritance and protein targeting from the cytoplasm to vacuole. Vacuole inheritance has a role in the regulation of hyphal cell division. In Candida albicans (strain SC5314 / ATCC MYA-2876) (Yeast), this protein is Vacuolar protein 8 (VAC8).